A 53-amino-acid chain; its full sequence is Lantibiotic paenibacillin (53 aa).

A propeptide spanning residues 1–24 is cleaved from the precursor; the sequence is MKVDQMFDLDLRKSYEASELSPQA. Ala24 is subject to N-acetylalanine. 2,3-didehydroalanine (Ser) is present on Ser25. A 2,3-didehydrobutyrine mark is found at Thr29 and Thr30. The segment at residues 34–38 is a cross-link (lanthionine (Ser-Cys)); that stretch reads SKAVC. 3 cross-links (beta-methyllanthionine (Thr-Cys)) span residues 40–43, 42–45, and 46–49; these read TLTC, TCIC, and TGSC. The lanthionine (Ser-Cys) cross-link spans 48–52; it reads SCSNC. Ser50 carries the post-translational modification 2,3-didehydroalanine (Ser).

Post-translationally, maturation of lantibiotics involves the enzymatic conversion of Thr, and Ser into dehydrated AA and the formation of thioether bonds with cysteine. This is followed by membrane translocation and cleavage of the modified precursor. In terms of processing, the structure of the 2,3-didehydrobutyrines is not discussed in PubMed:17071789.

Its subcellular location is the secreted. Functionally, lanthionine-containing peptide antibiotic (lantibiotic) active on Gram-positive bacteria. The bactericidal activity of lantibiotics is based on depolarization of energized bacterial cytoplasmic membranes, initiated by the formation of aqueous transmembrane pores. Lacks antibacterial activity against Gram-negative bacteria. This Paenibacillus polymyxa (Bacillus polymyxa) protein is Lantibiotic paenibacillin.